A 333-amino-acid chain; its full sequence is Pollen allergen KBG 41 (333 aa).

A signal peptide spans 1-23; it reads MAVHQYTVALFLAVALVAGPAAS. 2 consecutive repeat copies span residues 309-320 and 321-332. Positions 309–332 are 2 X 12 AA tandem repeats; the sequence is TGAATAAAGGYKTGAATPTAGGYK.

The protein belongs to the Poa p IX/Phl p VI allergen family. In terms of tissue distribution, pollen.

This chain is Pollen allergen KBG 41, found in Poa pratensis (Kentucky bluegrass).